The primary structure comprises 78 residues: Ubiquinol-cytochrome-c reductase complex assembly factor 3 (78 aa).

The Mitochondrial matrix portion of the chain corresponds to 1 to 5 (MSGMR). The chain crosses the membrane as a helical span at residues 6 to 26 (ILTGSVALGGLTYAIWIIFSP). Topologically, residues 27–78 (GEERKKEILKSLPEANPVRMEETRKRNAIMLQVLKDAAETNDNIARGFGSQK) are mitochondrial intermembrane.

Belongs to the UQCC3 family. In terms of assembly, associates with the ubiquinol-cytochrome c reductase complex (mitochondrial respiratory chain complex III or cytochrome b-c1 complex).

The protein localises to the mitochondrion inner membrane. Functionally, required for the assembly of the ubiquinol-cytochrome c reductase complex (mitochondrial respiratory chain complex III or cytochrome b-c1 complex), mediating cytochrome b recruitment and probably stabilization within the complex. Thereby, plays an important role in ATP production by mitochondria. Cardiolipin-binding protein, it may also control the cardiolipin composition of mitochondria membranes and their morphology. This chain is Ubiquinol-cytochrome-c reductase complex assembly factor 3, found in Danio rerio (Zebrafish).